We begin with the raw amino-acid sequence, 120 residues long: Small ribosomal subunit protein uS13 (120 aa).

Residues 96 to 120 form a disordered region; that stretch reads PCRGQRTRTNARTRKGPRKAIAGKK.

This sequence belongs to the universal ribosomal protein uS13 family. Part of the 30S ribosomal subunit. Forms a loose heterodimer with protein S19. Forms two bridges to the 50S subunit in the 70S ribosome.

Located at the top of the head of the 30S subunit, it contacts several helices of the 16S rRNA. In the 70S ribosome it contacts the 23S rRNA (bridge B1a) and protein L5 of the 50S subunit (bridge B1b), connecting the 2 subunits; these bridges are implicated in subunit movement. Contacts the tRNAs in the A and P-sites. The protein is Small ribosomal subunit protein uS13 of Dechloromonas aromatica (strain RCB).